The sequence spans 82 residues: uncharacterized protein (82 aa).

Residues 1–11 (MKARGSRENAS) are compositionally biased toward basic and acidic residues. The segment at 1 to 25 (MKARGSRENASKRRPSQTQYDTHLR) is disordered. A compositionally biased stretch (polar residues) spans 16 to 25 (SQTQYDTHLR).

This is an uncharacterized protein from Human cytomegalovirus (strain AD169) (HHV-5).